The sequence spans 216 residues: Small ribosomal subunit protein uS3c (216 aa).

Residues 43 to 115 (FENDWGTLYN…QTRIKVIQVN (73 aa)) form the KH type-2 domain.

This sequence belongs to the universal ribosomal protein uS3 family. As to quaternary structure, part of the 30S ribosomal subunit.

It localises to the plastid. It is found in the chloroplast. The polypeptide is Small ribosomal subunit protein uS3c (rps3) (Emiliania huxleyi (Coccolithophore)).